The following is an 80-amino-acid chain: Small ribosomal subunit protein bS18 (80 aa).

This sequence belongs to the bacterial ribosomal protein bS18 family. Part of the 30S ribosomal subunit. Forms a tight heterodimer with protein bS6.

In terms of biological role, binds as a heterodimer with protein bS6 to the central domain of the 16S rRNA, where it helps stabilize the platform of the 30S subunit. The sequence is that of Small ribosomal subunit protein bS18 from Acholeplasma laidlawii (strain PG-8A).